The chain runs to 117 residues: Ig heavy chain V region 108A (117 aa).

Positions 1-19 (MGWSWIFLFLLSGTAGVHS) are cleaved as a signal peptide. In terms of domain architecture, Ig-like spans 20–117 (EVQLQQSGPE…EDSAVYYCAR (98 aa)).

The polypeptide is Ig heavy chain V region 108A (Igh-VJ558) (Mus musculus (Mouse)).